Reading from the N-terminus, the 249-residue chain is 2,3-bisphosphoglycerate-dependent phosphoglycerate mutase (249 aa).

Residues 9–16 (RHGQSQWN), 22–23 (TG), Arg61, 88–91 (ERHY), Lys99, 115–116 (RR), and 184–185 (GN) contribute to the substrate site. Catalysis depends on His10, which acts as the Tele-phosphohistidine intermediate. Glu88 serves as the catalytic Proton donor/acceptor.

Belongs to the phosphoglycerate mutase family. BPG-dependent PGAM subfamily. In terms of assembly, homodimer.

The catalysed reaction is (2R)-2-phosphoglycerate = (2R)-3-phosphoglycerate. Its pathway is carbohydrate degradation; glycolysis; pyruvate from D-glyceraldehyde 3-phosphate: step 3/5. Catalyzes the interconversion of 2-phosphoglycerate and 3-phosphoglycerate. In Xanthomonas euvesicatoria pv. vesicatoria (strain 85-10) (Xanthomonas campestris pv. vesicatoria), this protein is 2,3-bisphosphoglycerate-dependent phosphoglycerate mutase.